The sequence spans 662 residues: PsbB mRNA maturation factor Mbb1, chloroplastic (662 aa).

The transit peptide at M1 to A50 directs the protein to the chloroplast. Disordered stretches follow at residues R14 to A38 and I75 to A101. Over residues S23–S32 the composition is skewed to low complexity. Basic and acidic residues predominate over residues E88 to A101. TPR repeat units follow at residues S126–D160, P161–V194, P196–H229, C231–K263, A269–A302, V305–S338, R339–D372, P373–D406, Y408–S440, and V444–S477. Disordered stretches follow at residues S540–A563 and L598–G662.

Part of a 300 kDa complex that associates with RNA.

It is found in the plastid. Its subcellular location is the chloroplast stroma. In terms of biological role, involved, directly or indirectly, in the processing of the chloroplast encoded psbB mRNA to its mature form, acting via the 5'-UTR of the psbB mRNA. This Chlamydomonas reinhardtii (Chlamydomonas smithii) protein is PsbB mRNA maturation factor Mbb1, chloroplastic (MBB1).